Here is a 1606-residue protein sequence, read N- to C-terminus: E3 ubiquitin-protein ligase HECW1 (1606 aa).

The region spanning 182–318 is the C2 domain; the sequence is SAAPIFKSIG…LERHAIGDRV (137 aa). Disordered stretches follow at residues 349 to 418, 459 to 538, 566 to 672, and 730 to 815; these read DDEE…PAEE, AEQL…CSLP, LLHS…SCEG, and STVF…SQLP. The span at 354 to 373 shows a compositional bias: polar residues; the sequence is SLSTEPESAQIQDSPMNNLM. Basic and acidic residues predominate over residues 380–392; that stretch reads PRSEAPESSESWK. Composition is skewed to acidic residues over residues 500 to 511 and 579 to 588; these read EEEEKEQEEEGD and AEEEDGAEEE. Residues 589-600 show a composition bias toward basic and acidic residues; the sequence is STLKDSSEKDGL. Residues 612 to 621 show a composition bias toward acidic residues; it reads ALEEDREEPE. Polar residues-rich tracts occupy residues 651–663, 751–765, and 806–815; these read HPST…SSPR, DSMQ…STNG, and HNSQPVSQLP. Positions 829-862 constitute a WW 1 domain; it reads EPLPPNWEARIDSHGRVFYVDHVNRTTTWQRPTA. A coiled-coil region spans residues 870-901; it reads RRSGSIQQMEQLNRRYQNIQRTIATERSEEDS. A phosphoserine mark is found at S874, S937, and S939. Positions 894-938 are disordered; the sequence is TERSEEDSGSQSCEQAPAGGGGGGGSDSEAESSQSSLDLRREGSL. The region spanning 1018–1051 is the WW 2 domain; the sequence is LELPRGWEIKTDQQGKSFFVDHNSRATTFIDPRI. In terms of domain architecture, HECT spans 1271-1606; that stretch reads SRKELQRNKL…VEETSTFGLE (336 aa). The Glycyl thioester intermediate role is filled by C1574.

As to quaternary structure, interacts with DVL1 and SSR3. Also interacts with mutant SOD1. In terms of tissue distribution, predominantly expressed in neurons of adult and fetal brain. Weakly expressed in the kidney.

Its subcellular location is the cytoplasm. It catalyses the reaction S-ubiquitinyl-[E2 ubiquitin-conjugating enzyme]-L-cysteine + [acceptor protein]-L-lysine = [E2 ubiquitin-conjugating enzyme]-L-cysteine + N(6)-ubiquitinyl-[acceptor protein]-L-lysine.. It functions in the pathway protein modification; protein ubiquitination. Its function is as follows. E3 ubiquitin-protein ligase that mediates ubiquitination and subsequent degradation of DVL1. Also targets the mutant SOD1 protein involved in familial amyotrophic lateral sclerosis (FALS). Forms cytotoxic aggregates with DVL1, SSR3 and mutant SOD1 that lead to motor neuron death in FALS. The protein is E3 ubiquitin-protein ligase HECW1 (HECW1) of Homo sapiens (Human).